Consider the following 72-residue polypeptide: SRY-related protein ADW2 (72 aa).

Positions 1–69 (VKRPMNAFMV…KHMADYADYK (69 aa)) form a DNA-binding region, HMG box.

The protein resides in the nucleus. The polypeptide is SRY-related protein ADW2 (Alligator mississippiensis (American alligator)).